Here is a 73-residue protein sequence, read N- to C-terminus: UPF0235 protein HY04AAS1_1378 (73 aa).

This sequence belongs to the UPF0235 family.

The protein is UPF0235 protein HY04AAS1_1378 of Hydrogenobaculum sp. (strain Y04AAS1).